Here is a 306-residue protein sequence, read N- to C-terminus: Tyrosine recombinase XerC (306 aa).

The 80-residue stretch at 2 to 81 folds into the Core-binding (CB) domain; that stretch reads AKASAAIEEF…ALRQFYGFLV (80 aa). A Tyr recombinase domain is found at 102–283; the sequence is PLPKTLSHKE…DAARLVALVN (182 aa). Catalysis depends on residues R146, K170, H235, R238, and H261. Residue Y270 is the O-(3'-phospho-DNA)-tyrosine intermediate of the active site.

Belongs to the 'phage' integrase family. XerC subfamily. Forms a cyclic heterotetrameric complex composed of two molecules of XerC and two molecules of XerD.

It localises to the cytoplasm. Its function is as follows. Site-specific tyrosine recombinase, which acts by catalyzing the cutting and rejoining of the recombining DNA molecules. The XerC-XerD complex is essential to convert dimers of the bacterial chromosome into monomers to permit their segregation at cell division. It also contributes to the segregational stability of plasmids. This Erythrobacter litoralis (strain HTCC2594) protein is Tyrosine recombinase XerC.